Reading from the N-terminus, the 423-residue chain is Serine incorporator 5 (423 aa).

Over 1–36 (MSAQCCAGQLACCCGSAGCSLCCDCCPRIRQSLSTR) the chain is Extracellular. A helical transmembrane segment spans residues 37–57 (FMYALYFILVVVLCCIMMSTT). Over 58 to 89 (VAHKMKEHIPFFEDMCKGIKAGDTCEKLVGYS) the chain is Cytoplasmic. Residues 90 to 110 (AVYRVCFGMACFFFIFCLLTL) form a helical membrane-spanning segment. The Extracellular segment spans residues 111 to 124 (KINNSKSCRAHIHN). Residue Asn-113 is glycosylated (N-linked (GlcNAc...) asparagine). Residues 125 to 145 (GFWFFKLLLLGAMCSGAFFIP) form a helical membrane-spanning segment. At 146–156 (DQDTFLNAWRY) the chain is on the cytoplasmic side. The chain crosses the membrane as a helical span at residues 157-177 (VGAVGGFLFIGIQLLLLVEFA). Residues 178 to 198 (HKWNKNWTAGTASNKLWYASL) are Extracellular-facing. A glycan (N-linked (GlcNAc...) asparagine) is linked at Asn-183. A helical membrane pass occupies residues 199 to 219 (ALVTLIMYSIATGGLVLMAVF). At 220-230 (YTQKDSCMENK) the chain is on the cytoplasmic side. A helical membrane pass occupies residues 231-251 (ILLGVNGGLCLLISLVAISPW). Residues 252-258 (VQNRQPH) lie on the Extracellular side of the membrane. The chain crosses the membrane as a helical span at residues 259-279 (SGLLQSGVISCYVTYLTFSAL). Residues 280 to 311 (SSKPAEVVLDEHGKNVTICVPDFGQDLYRDEN) are Cytoplasmic-facing. A helical membrane pass occupies residues 312 to 332 (LVTILGTSLLIGCILYSCLTS). Topologically, residues 333–385 (TTRSSSDALQGRYAAPELEIARCCFCFSPGGEDTEEQQPGKEGPRVIYDEKKG) are extracellular. A helical membrane pass occupies residues 386–406 (TVYIYSYFHFVFFLASLYVMM). Residues 407-423 (TVTNWFNHVRSAFHLLP) are Cytoplasmic-facing.

This sequence belongs to the TDE1 family. Highly expressed in placenta, skeletal muscle, spleen, thymus, testis and peripheral leukocyte and is expressed weakly in the heart, liver and fetal brain.

Its subcellular location is the cell membrane. The protein resides in the cytoplasm. It is found in the perinuclear region. It catalyses the reaction a 1,2-diacyl-sn-glycero-3-phospho-L-serine(in) = a 1,2-diacyl-sn-glycero-3-phospho-L-serine(out). The catalysed reaction is a 1,2-diacyl-sn-glycero-3-phosphocholine(in) = a 1,2-diacyl-sn-glycero-3-phosphocholine(out). The enzyme catalyses a 1,2-diacyl-sn-glycero-3-phosphoethanolamine(in) = a 1,2-diacyl-sn-glycero-3-phosphoethanolamine(out). Its function is as follows. Restriction factor required to restrict infectivity of lentiviruses, such as HIV-1: acts by inhibiting an early step of viral infection. Impairs the penetration of the viral particle into the cytoplasm. Non-ATP-dependent, non-specific lipid transporter for phosphatidylserine, phosphatidylcholine, and phosphatidylethanolamine. Functions as a scramblase that flips lipids in both directions across the membrane. Phospholipid scrambling results in HIV-1 surface exposure of phosphatidylserine and loss of membrane asymmetry, which leads to changes in HIV-1 Env conformation and loss of infectivity. Enhances the incorporation of serine into phosphatidylserine and sphingolipids. May play a role in providing serine molecules for the formation of myelin glycosphingolipids in oligodendrocytes. In Homo sapiens (Human), this protein is Serine incorporator 5.